A 293-amino-acid chain; its full sequence is Homoserine kinase (293 aa).

Position 83-93 (83-93 (RPKSGLGSSGA)) interacts with ATP.

It belongs to the GHMP kinase family. Homoserine kinase subfamily.

The protein localises to the cytoplasm. The enzyme catalyses L-homoserine + ATP = O-phospho-L-homoserine + ADP + H(+). The protein operates within amino-acid biosynthesis; L-threonine biosynthesis; L-threonine from L-aspartate: step 4/5. Catalyzes the ATP-dependent phosphorylation of L-homoserine to L-homoserine phosphate. The chain is Homoserine kinase from Pyrococcus horikoshii (strain ATCC 700860 / DSM 12428 / JCM 9974 / NBRC 100139 / OT-3).